A 324-amino-acid chain; its full sequence is Uric acid degradation bifunctional protein TTL (324 aa).

Ala-2 bears the N-acetylalanine mark. The tract at residues 2–29 (AMEIGEDEWKVCCGSSEFAKQMSTSGPL) is required for BRI1-binding. The segment at 2–161 (AMEIGEDEWK…LRMAKLFSDK (160 aa)) is OHCU decarboxylase. The active-site Proton donor; for OHCU decarboxylase activity is the His-58. His-58, Pro-59, Glu-80, Phe-111, Ile-113, and Ala-115 together coordinate (S)-allantoin. Positions 178-324 (KPQDRLRIIG…PFSFSTYRGS (147 aa)) are HIU hydrolase. An Internal peroxisomal targeting signal (PTS2) motif is present at residues 182–190 (RLRIIGGHL).

The protein in the N-terminal section; belongs to the OHCU decarboxylase family. In the C-terminal section; belongs to the transthyretin family. 5-hydroxyisourate hydrolase subfamily. In terms of assembly, homodimer. Forms tetramers. Interacts with BRI1 in a kinase-dependent manner. Interacts with B1L. In terms of processing, phosphorylated by BRI1 in vitro. Expressed ubiquitously with highest levels in flowers buds and elongating inflorescences. As to expression, mainly expressed in stems and leaves, and, to a lower extent, in flowers, flower buds and seedlings. In terms of tissue distribution, strongly expressed in flower buds and leaves, to a lower extent in stems, and at low levels in seedlings and flowers.

It localises to the cell membrane. It is found in the peroxisome. Its subcellular location is the cytoplasm. The protein resides in the cytosol. The catalysed reaction is 5-hydroxyisourate + H2O = 5-hydroxy-2-oxo-4-ureido-2,5-dihydro-1H-imidazole-5-carboxylate + H(+). It catalyses the reaction 5-hydroxy-2-oxo-4-ureido-2,5-dihydro-1H-imidazole-5-carboxylate + H(+) = (S)-allantoin + CO2. The protein operates within purine metabolism; urate degradation; (S)-allantoin from urate: step 2/3. It participates in purine metabolism; urate degradation; (S)-allantoin from urate: step 3/3. Its function is as follows. Involved in the last two steps of the degradation of uric acid, i.e. the hydrolysis of 5-hydroxyisourate (HIU) to 2-oxo-4-hydroxy-4-carboxy-5-ureidoimidazoline (OHCU) and its stereoselective decarboxylation to (S)-allantoin, a major ureide compound. Might function as a negative regulator to modulate brassinosteroid-mediated plant growth. Together with B1L, prevents plant growth and development, but by opposition to B1L, negatively regulates cold tolerance, probably in a brassinosteroid (BR) and allantoin-dependent manner. This chain is Uric acid degradation bifunctional protein TTL, found in Arabidopsis thaliana (Mouse-ear cress).